The chain runs to 1337 residues: Activated Cdc42 kinase-like (1337 aa).

S71 bears the Phosphoserine mark. The region spanning 133–399 (ISVNKQLGTG…GEIYDQLPDM (267 aa)) is the Protein kinase domain. Residues 139 to 147 (LGTGEFGIV) and K164 contribute to the ATP site. The active-site Proton acceptor is D260. Phosphotyrosine occurs at positions 291 and 292. Positions 399 to 460 (MKPEQLKAVV…NPSNTVAFLE (62 aa)) constitute an SH3 domain. Positions 488–502 (ISKPQNDFKHTGHVG) constitute a CRIB domain. The segment at 714 to 739 (SGDTNGNKHGHGLLPTLSKKKSSGTV) is disordered. Phosphoserine occurs at positions 764 and 778. Residues 786–822 (RFPHLSNNGSGDKSGGLGTSGSAHTPTHGNASPFPKK) form a disordered region. Polar residues predominate over residues 805–815 (SGSAHTPTHGN). Phosphoserine occurs at positions 831, 918, and 924. Disordered regions lie at residues 906 to 969 (AGLS…TSTK) and 1024 to 1045 (PSGMRRPSRPSEREYENMPTVG). Pro residues predominate over residues 947 to 957 (PESPNPIPLPP).

This sequence belongs to the protein kinase superfamily. Tyr protein kinase family.

The enzyme catalyses L-tyrosyl-[protein] + ATP = O-phospho-L-tyrosyl-[protein] + ADP + H(+). Likely to act as a downstream effector of Cdc42 during dorsal closure, acting in a kinase independent manner with the other ACK family member Ack to positively regulate expression of the myosin zip by promoting the endocytosis of Egfr in the amnioserosa (AS). The chain is Activated Cdc42 kinase-like from Drosophila melanogaster (Fruit fly).